Here is a 311-residue protein sequence, read N- to C-terminus: uncharacterized protein (311 aa).

10 consecutive transmembrane segments (helical) span residues 13-33, 41-61, 76-96, 103-123, 128-148, 157-177, 192-212, 218-238, 248-268, and 272-292; these read STAV…GFFS, FELV…CWLA, LQTL…FKSF, IAIS…SFFY, NVIS…ISGI, LMGS…FTTL, FLQT…GAFA, NWIM…LLFF, FISI…TVFT, and PDLY…LTLV. EamA domains are found at residues 24-147 and 166-292; these read VIFG…LISG and VLAA…LTLV.

Belongs to the EamA transporter family.

The protein localises to the cell membrane. This is an uncharacterized protein from Bacillus subtilis (strain 168).